The sequence spans 363 residues: tRNA-specific 2-thiouridylase MnmA (363 aa).

ATP is bound by residues 8–15 (AMSGGVDS) and leucine 34. Cysteine 103 functions as the Nucleophile in the catalytic mechanism. Cysteine 103 and cysteine 195 are oxidised to a cystine. Glycine 127 is an ATP binding site. Residues 145–147 (KDQ) are interaction with tRNA. The active-site Cysteine persulfide intermediate is cysteine 195.

Belongs to the MnmA/TRMU family.

The protein resides in the cytoplasm. The catalysed reaction is S-sulfanyl-L-cysteinyl-[protein] + uridine(34) in tRNA + AH2 + ATP = 2-thiouridine(34) in tRNA + L-cysteinyl-[protein] + A + AMP + diphosphate + H(+). Its function is as follows. Catalyzes the 2-thiolation of uridine at the wobble position (U34) of tRNA, leading to the formation of s(2)U34. The sequence is that of tRNA-specific 2-thiouridylase MnmA from Thermobifida fusca (strain YX).